Reading from the N-terminus, the 962-residue chain is IQ motif and SEC7 domain-containing protein 1 (962 aa).

A disordered region spans residues 1–96 (MACRRRYLSS…STSVLRKQAE (96 aa)). Positions 8–19 (LSSLETGSSLST) are enriched in low complexity. Polar residues predominate over residues 30-39 (SSETGTSLDS). S89, S105, and S107 each carry phosphoserine. In terms of domain architecture, IQ spans 134 to 163 (TRHAARTIQTAFRQYQMNKNFERLRSSMSE). Residues S180, S248, and S252 each carry the phosphoserine modification. 3 disordered regions span residues 264–292 (SEEV…HRKL), 311–333 (LSPP…DLRL), and 348–516 (KEDK…DSPA). Residues 273 to 292 (ARARDTEPKPGLHGMDHRKL) show a composition bias toward basic and acidic residues. 2 stretches are compositionally biased toward basic and acidic residues: residues 365–375 (ERPEPRLRVEH) and 429–445 (LPRE…RPLE). The span at 470–488 (DSINSTSNSNDTINCSSES) shows a compositional bias: low complexity. Residues S511 and S514 each carry the phosphoserine modification. In terms of domain architecture, SEC7 spans 516 to 709 (AFSNDVIRKR…IGIYERIRKR (194 aa)). Residues 773 to 865 (HQREIFLFND…LRESVAEVQE (93 aa)) enclose the PH domain. At S891 the chain carries Phosphoserine. At Y910 the chain carries Phosphotyrosine. A disordered region spans residues 921-962 (LSSSLRDLSEAGKRGRRSSAGSLESNVEFQPFQPSQPPVLCS). Phosphoserine is present on residues S923 and S924. A compositionally biased stretch (polar residues) spans 939–948 (SAGSLESNVE).

It belongs to the BRAG family. Interacts with ARF1 and ARF6. Interacts with GRIA2; the interaction is required for ARF6 activation.

Its subcellular location is the cytoplasm. It localises to the nucleus. It is found in the postsynaptic density. The protein resides in the cytoplasmic vesicle. The protein localises to the secretory vesicle. Its subcellular location is the synaptic vesicle. Functionally, guanine nucleotide exchange factor for ARF1 and ARF6. Guanine nucleotide exchange factor activity is enhanced by lipid binding. Accelerates GTP binding by ARFs of all three classes. Guanine nucleotide exchange protein for ARF6, mediating internalization of beta-1 integrin. Involved in neuronal development. In neurons, plays a role in the control of vesicle formation by endocytoc cargo. Upon long term depression, interacts with GRIA2 and mediates the activation of ARF6 to internalize synaptic AMPAR receptors. In Rattus norvegicus (Rat), this protein is IQ motif and SEC7 domain-containing protein 1.